The chain runs to 212 residues: Thymidylate kinase (212 aa).

10 to 17 (GPEGAGKT) provides a ligand contact to ATP.

It belongs to the thymidylate kinase family.

The catalysed reaction is dTMP + ATP = dTDP + ADP. Its function is as follows. Phosphorylation of dTMP to form dTDP in both de novo and salvage pathways of dTTP synthesis. This is Thymidylate kinase from Bacillus velezensis (strain DSM 23117 / BGSC 10A6 / LMG 26770 / FZB42) (Bacillus amyloliquefaciens subsp. plantarum).